Consider the following 711-residue polypeptide: Polyribonucleotide nucleotidyltransferase (711 aa).

Residues aspartate 486 and aspartate 492 each contribute to the Mg(2+) site. One can recognise a KH domain in the interval 553–612 (PRIHTIKINPDKIKDVIGKGGSVIRALTEETGTTIEIEDDGTVKIAATDGDKAQHAIRRI). One can recognise an S1 motif domain in the interval 622-690 (GRIYNGKVTR…RQGRVRLSIK (69 aa)). Residues 691–711 (EATEQTPSAAAPEAPVAEQGE) are disordered. Residues 699–711 (AAAPEAPVAEQGE) are compositionally biased toward low complexity.

The protein belongs to the polyribonucleotide nucleotidyltransferase family. As to quaternary structure, component of the RNA degradosome, which is a multiprotein complex involved in RNA processing and mRNA degradation. Mg(2+) serves as cofactor.

Its subcellular location is the cytoplasm. The enzyme catalyses RNA(n+1) + phosphate = RNA(n) + a ribonucleoside 5'-diphosphate. In terms of biological role, involved in mRNA degradation. Catalyzes the phosphorolysis of single-stranded polyribonucleotides processively in the 3'- to 5'-direction. This is Polyribonucleotide nucleotidyltransferase from Klebsiella pneumoniae (strain 342).